Here is a 150-residue protein sequence, read N- to C-terminus: UPF0098 protein CT_736 (150 aa).

The protein belongs to the UPF0098 family.

This is UPF0098 protein CT_736 from Chlamydia trachomatis serovar D (strain ATCC VR-885 / DSM 19411 / UW-3/Cx).